Reading from the N-terminus, the 663-residue chain is MTVGVCYFPEHWSRERWETDISQMAEAGIEYVRMGEFAWRRIEPERGTFDFAWLDEAVELIGKFGMKAVLCTPTATPPKWLVDEHPDVRQREQDGTPREWGSRRFTCFNSPTYRSETERIVSVLTDRYADNPHVAGWQTDNEFGCHETVTCYCEDCGEAFSEWLADRYESVADLNDAWGTTFWSQQYDDFESIDPPKPTPAANHPSRVLAYERFSNDSVAEYNRLHAALIREANDEWFVTHNFMGGFSLDAFRLAADLDFLSWDSYPTGFVQDRQPDTPTVDELRAGNPDQVSMNHDLQRGAKGKPFWVMEQQPGDINWPPQSPQPADGAMRLWAHHAVAHGADAVVYFRWRRCRQGQEQYHAGLRRQDGSPDRGYREASTAADELFDLDSVDASVALVHDYESLWATRSQPLSPDWDYWNHLRTYYDALRARGVQVDIVSPEATLERYDAVVAPTLYLVGDELSTALTDYVDSGGCLLLGARTGEKDPYNRLHESLAPGPLTALTGAQVARHETLPDHVETRLSYDGATYEFRTWASWLAPEVGVPRGEYRTGEAAGNTAIVRNAAGDGSVTYCGCWPGDDLADALVTELLDAAGVEYTERFPDGVRVMERDGYTWALNFTSDPVTLTVPDSTGFLLGESTVDAFDTAVLDGSIRGVGLASE.

Substrate is bound at residue Arg-103. Cys-107 contacts Zn(2+). Asn-141 contributes to the substrate binding site. Catalysis depends on Glu-142, which acts as the Proton donor. Cys-151, Cys-153, and Cys-156 together coordinate Zn(2+). Glu-311 functions as the Nucleophile in the catalytic mechanism. Substrate contacts are provided by residues Trp-319 and 359 to 362 (EQYH).

Belongs to the glycosyl hydrolase 42 family. In terms of assembly, homodimer.

The catalysed reaction is Hydrolysis of terminal non-reducing beta-D-galactose residues in beta-D-galactosides.. With respect to regulation, requires 4 M NaCl for maximal activity. Loss of activity if DTT or beta-mercaptoethanol is omitted from buffers. Addition of 5-20 mM EDTA, 1 mM Cu(2+) or 1 mM Zn(2+) results in loss of activity. Its function is as follows. When overexpressed, cleaves several different substrates including o-nitrophenyl-beta-D-galactopyranoside (ONPG), chromogen 5-bromo-4-chloro-3-indolyl-beta-D-galactopyranoside (X-Gal) and lactulose, but not lactose. Also has beta-D-fucosidase activity. No beta-L-fucosidase, beta-glucosidase, beta-arabinosidase or beta-xylosidase activity. The protein is Beta-galactosidase BgaH of Haloferax lucentense (strain DSM 14919 / JCM 9276 / NCIMB 13854 / Aa 2.2) (Haloferax alicantei).